The following is a 720-amino-acid chain: Phosphate acetyltransferase (720 aa).

Residues 389 to 720 (AFRHELVQKS…LEAKAAALAS (332 aa)) are phosphate acetyltransferase.

The protein in the N-terminal section; belongs to the CobB/CobQ family. In the C-terminal section; belongs to the phosphate acetyltransferase and butyryltransferase family. Homohexamer.

It is found in the cytoplasm. It catalyses the reaction acetyl-CoA + phosphate = acetyl phosphate + CoA. It functions in the pathway metabolic intermediate biosynthesis; acetyl-CoA biosynthesis; acetyl-CoA from acetate: step 2/2. In terms of biological role, involved in acetate metabolism. The chain is Phosphate acetyltransferase (pta) from Acinetobacter baylyi (strain ATCC 33305 / BD413 / ADP1).